The primary structure comprises 338 residues: mRNA decay activator protein ZFP36L1 (338 aa).

The interval 1-111 is necessary and sufficient for the association with mRNA decay enzymes and mRNA decay activation; that stretch reads MTTTLVSATI…QKQPGSGQVN (111 aa). Position 54 is a phosphoserine; by MAPKAPK2 (Ser-54). Ser-90 carries the post-translational modification Phosphoserine; by PKB/AKT1. Ser-92 is subject to Phosphoserine; by PKB/AKT1 and MAPKAPK2. Residues 93-113 are disordered; it reads EGGERLLPTQKQPGSGQVNSS. Over residues 101–113 the composition is skewed to polar residues; it reads TQKQPGSGQVNSS. 2 consecutive C3H1-type zinc fingers follow at residues 114 to 142 and 152 to 180; these read RYKT…HGIH and KYKT…HNAE. Residues 185 to 338 form a necessary for mRNA decay activation region; it reads LAGGRDLSAD…IFSRLSISDD (154 aa). Residue Ser-203 is modified to Phosphoserine; by PKB/AKT1 and MAPKAPK2. The interval 273–338 is disordered; the sequence is SPTTFLFRPM…IFSRLSISDD (66 aa). Low complexity predominate over residues 305-318; the sequence is YLSSSSSSHSGSDS. Ser-318 is modified (phosphoserine). Residue Ser-334 is modified to Phosphoserine; by RPS6KA1.

In terms of assembly, associates with the cytoplasmic CCR4-NOT deadenylase and RNA exosome complexes to trigger ARE-containing mRNA deadenylation and decay processes. Interacts with CNOT1. Interacts (via N-terminus) with CNOT6. Interacts with CNOT7; this interaction is inhibited in response to phorbol 12-myristate 13-acetate (PMA) treatment in a p38 MAPK-dependent manner. Interacts with DCP1A. Interacts (via N-terminus) with DCP2. Interacts (via N-terminus) with EXOSC2. Interacts with XRN1. Interacts (via phosphorylated form) with YWHAB; this interaction occurs in a protein kinase AKT1-dependent manner. Interacts (via phosphorylated form) with YWHAZ; this interaction occurs in a p38 MAPK- and AKT-signaling pathways. In terms of processing, phosphorylated. Phosphorylated by RPS6KA1 at Ser-334 upon phorbol 12-myristate 13-acetate (PMA) treatment; this phosphorylation results in dissociation of the CCR4-NOT deadenylase complex and induces p38 MAPK-mediated stabilization of the low-density lipoprotein receptor LDLR mRNA. Phosphorylated by protein kinase AKT1 at Ser-92 and Ser-203 in response to insulin; these phosphorylations stabilize ZFP36L1, increase the association with 14-3-3 proteins and mediate ARE-containing mRNA stabilization. AKT1-mediated phosphorylation at Ser-92 does not impair ARE-containing RNA-binding. Phosphorylated at Ser-54, Ser-92 and Ser-203 by MAPKAPK2; these phosphorylations increase the association with 14-3-3 proteins and mediate ARE-containing mRNA stabilization in a protein kinase AKT1-independent manner. MAPKAPK2-mediated phosphorylations at Ser-54, Ser-92 and Ser-203 do not impair ARE-containing RNA-binding. Phosphorylations increase the association with 14-3-3 proteins and mediate ARE-containing mRNA stabilization during early adipogenesis in a p38 MAPK- and AKT-dependent manner. Phosphorylated by protein kinase AKT1 at Ser-92. Post-translationally, ubiquitinated. Ubiquitination leads to proteasomal degradation, a process inhibited by phosphorylations at Ser-90, Ser-92 and Ser-203.

It localises to the nucleus. The protein localises to the cytoplasm. It is found in the cytoplasmic granule. The protein resides in the P-body. Its function is as follows. Zinc-finger RNA-binding protein that destabilizes several cytoplasmic AU-rich element (ARE)-containing mRNA transcripts by promoting their poly(A) tail removal or deadenylation, and hence provide a mechanism for attenuating protein synthesis. Acts as a 3'-untranslated region (UTR) ARE mRNA-binding adapter protein to communicate signaling events to the mRNA decay machinery. Functions by recruiting the CCR4-NOT deadenylase complex and components of the cytoplasmic RNA decay machinery to the bound ARE-containing mRNAs, and hence promotes ARE-mediated mRNA deadenylation and decay processes. Also induces the degradation of ARE-containing mRNAs even in absence of poly(A) tail. Binds to 3'-UTR ARE of numerous mRNAs. Positively regulates early adipogenesis by promoting ARE-mediated mRNA decay of immediate early genes (IEGs). Promotes ARE-mediated mRNA decay of mineralocorticoid receptor NR3C2 mRNA in response to hypertonic stress. Negatively regulates hematopoietic/erythroid cell differentiation by promoting ARE-mediated mRNA decay of the transcription factor STAT5B mRNA. Positively regulates monocyte/macrophage cell differentiation by promoting ARE-mediated mRNA decay of the cyclin-dependent kinase CDK6 mRNA. Promotes degradation of ARE-containing pluripotency-associated mRNAs in embryonic stem cells (ESCs), such as NANOG, through a fibroblast growth factor (FGF)-induced MAPK-dependent signaling pathway, and hence attenuates ESC self-renewal and positively regulates mesendoderm differentiation. May play a role in mediating pro-apoptotic effects in malignant B-cells by promoting ARE-mediated mRNA decay of BCL2 mRNA. In association with ZFP36L2 maintains quiescence on developing B lymphocytes by promoting ARE-mediated decay of several mRNAs encoding cell cycle regulators that help B cells progress through the cell cycle, and hence ensuring accurate variable-diversity-joining (VDJ) recombination and functional immune cell formation. Together with ZFP36L2 is also necessary for thymocyte development and prevention of T-cell acute lymphoblastic leukemia (T-ALL) transformation by promoting ARE-mediated mRNA decay of the oncogenic transcription factor NOTCH1 mRNA. Participates in the delivery of target ARE-mRNAs to processing bodies (PBs). In addition to its cytosolic mRNA-decay function, plays a role in the regulation of nuclear mRNA 3'-end processing; modulates mRNA 3'-end maturation efficiency of the DLL4 mRNA through binding with an ARE embedded in a weak noncanonical polyadenylation (poly(A)) signal in endothelial cells. Also involved in the regulation of stress granule (SG) and P-body (PB) formation and fusion. Plays a role in vasculogenesis and endocardial development. Plays a role in the regulation of keratinocyte proliferation, differentiation and apoptosis. Plays a role in myoblast cell differentiation. The protein is mRNA decay activator protein ZFP36L1 of Rattus norvegicus (Rat).